We begin with the raw amino-acid sequence, 204 residues long: Regulatory protein RecX (204 aa).

Residues 1–22 (MTKSSRPQSISDSVSVAGSQGT) are compositionally biased toward polar residues. The disordered stretch occupies residues 1 to 44 (MTKSSRPQSISDSVSVAGSQGTLDDLRARVASVPEAPTREPVDS).

This sequence belongs to the RecX family.

It localises to the cytoplasm. In terms of biological role, modulates RecA activity. The chain is Regulatory protein RecX from Mycobacteroides abscessus (strain ATCC 19977 / DSM 44196 / CCUG 20993 / CIP 104536 / JCM 13569 / NCTC 13031 / TMC 1543 / L948) (Mycobacterium abscessus).